Reading from the N-terminus, the 777-residue chain is MSEQQVHSVTVELAGRPLTIEAGRVAQLANGAVLVRYGDTVLLAAVTASAEPRDGIDFFPLTVDYEEKMYAAGKIPGSFFKREGRPTETAILTSRLTDRPLRPLFPKGYYNDVQVSITTLSTDQVNDPGPLAIIGASAALVISDIPFAAPVGAVQMGHIDGVFAVNPVMGLMENSRLDLVVAGTSEAVMMVEASAYELTEAEMLEAVKRGHEAMQAVIQAQLELAEKCGKPKKEFVAPVVDTSLQDEIKAWMGNRFLQALNNSDKAAREAATDSLRTDVLEQFSAGVAEEELAARVKAVTKNYDALVKDEVRASILEQGIRVDGRKVNEIRPIAVDVGVLPRVHGSGLFTRGQTQVLTVATLGSPGDEQRLDDLGIETTRHYMHHYNFPAFSTGEARPSRGPRRRDIGHGKLAERALVPVLPEKDKFPYTMRLVSEVLASNGSSSMASVCGSSLALMDAGVPIKAPVAGVAMGLITGKEAGQFSVLTDIQGLEDALGDMDFKVAGTTAGITALQMDIKTTGITYEIMQQAFEQARQGRVFILDKMNEIINTARNDISQFAPRIITLQIDPSKIGALIGPGGKTIRSIIEQTGAQIDVEDDGRVFVTTPDADGARMAQSLIEGLTREAKVGEIFTGKVVRIMPYGAFVNVLPGKDGMVHVSELDEKRVENVEDVVKIGDELTVMVIDVEPGTGKLSLSRRAILTGETAEQRKSSSSKGGPRGGGGGGDRGPRPGGDRGPRPEGDRGPRPEGDRPREGGDRGPRPGNGGNDRRGGGFRG.

Mg(2+) contacts are provided by Asp-494 and Asp-500. In terms of domain architecture, KH spans Pro-561 to Ile-620. Residues Gly-630 to Arg-699 enclose the S1 motif domain. The segment at Thr-703 to Gly-777 is disordered. Over residues Gly-718–Asp-727 the composition is skewed to gly residues. Basic and acidic residues-rich tracts occupy residues Arg-728 to Pro-761 and Asn-768 to Gly-777.

This sequence belongs to the polyribonucleotide nucleotidyltransferase family. The cofactor is Mg(2+).

Its subcellular location is the cytoplasm. It carries out the reaction RNA(n+1) + phosphate = RNA(n) + a ribonucleoside 5'-diphosphate. Involved in mRNA degradation. Catalyzes the phosphorolysis of single-stranded polyribonucleotides processively in the 3'- to 5'-direction. In Herpetosiphon aurantiacus (strain ATCC 23779 / DSM 785 / 114-95), this protein is Polyribonucleotide nucleotidyltransferase.